The sequence spans 432 residues: Adenylosuccinate synthetase (432 aa).

Residues 13 to 19 (GDEGKGK) and 41 to 43 (GHT) contribute to the GTP site. Residue aspartate 14 is the Proton acceptor of the active site. Residues aspartate 14 and glycine 41 each coordinate Mg(2+). IMP is bound by residues 14–17 (DEGK), 39–42 (NAGH), threonine 130, arginine 144, glutamine 225, threonine 240, and arginine 304. Histidine 42 acts as the Proton donor in catalysis. Position 300–306 (300–306 (AVTGRPR)) interacts with substrate. Residues arginine 306, 332–334 (KLD), and 415–417 (STG) each bind GTP.

Belongs to the adenylosuccinate synthetase family. As to quaternary structure, homodimer. It depends on Mg(2+) as a cofactor.

It is found in the cytoplasm. The catalysed reaction is IMP + L-aspartate + GTP = N(6)-(1,2-dicarboxyethyl)-AMP + GDP + phosphate + 2 H(+). It participates in purine metabolism; AMP biosynthesis via de novo pathway; AMP from IMP: step 1/2. Its function is as follows. Plays an important role in the de novo pathway of purine nucleotide biosynthesis. Catalyzes the first committed step in the biosynthesis of AMP from IMP. The sequence is that of Adenylosuccinate synthetase from Actinobacillus pleuropneumoniae serotype 3 (strain JL03).